Here is a 254-residue protein sequence, read N- to C-terminus: Type III pantothenate kinase (254 aa).

6 to 13 (DLGNSAIK) lines the ATP pocket. Substrate-binding positions include tyrosine 99 and 106–109 (GVDR). The active-site Proton acceptor is the aspartate 108. Aspartate 128 contacts K(+). Threonine 131 is a binding site for ATP. Threonine 182 is a binding site for substrate.

The protein belongs to the type III pantothenate kinase family. Homodimer. NH4(+) is required as a cofactor. The cofactor is K(+).

It localises to the cytoplasm. It carries out the reaction (R)-pantothenate + ATP = (R)-4'-phosphopantothenate + ADP + H(+). It participates in cofactor biosynthesis; coenzyme A biosynthesis; CoA from (R)-pantothenate: step 1/5. Catalyzes the phosphorylation of pantothenate (Pan), the first step in CoA biosynthesis. The polypeptide is Type III pantothenate kinase (Halorhodospira halophila (strain DSM 244 / SL1) (Ectothiorhodospira halophila (strain DSM 244 / SL1))).